A 434-amino-acid polypeptide reads, in one-letter code: Histidinol dehydrogenase (434 aa).

NAD(+) is bound by residues Y130, Q188, and N211. Residues S237, Q259, and H262 each contribute to the substrate site. Q259 and H262 together coordinate Zn(2+). Residues E326 and H327 each act as proton acceptor in the active site. Residues H327, D360, E414, and H419 each coordinate substrate. Zn(2+) is bound at residue D360. H419 contributes to the Zn(2+) binding site.

Belongs to the histidinol dehydrogenase family. Homodimer. The cofactor is Zn(2+).

It catalyses the reaction L-histidinol + 2 NAD(+) + H2O = L-histidine + 2 NADH + 3 H(+). It functions in the pathway amino-acid biosynthesis; L-histidine biosynthesis; L-histidine from 5-phospho-alpha-D-ribose 1-diphosphate: step 9/9. Functionally, catalyzes the sequential NAD-dependent oxidations of L-histidinol to L-histidinaldehyde and then to L-histidine. This Escherichia coli O6:H1 (strain CFT073 / ATCC 700928 / UPEC) protein is Histidinol dehydrogenase.